Reading from the N-terminus, the 215-residue chain is Probable transaldolase (215 aa).

The Schiff-base intermediate with substrate role is filled by lysine 83.

The protein belongs to the transaldolase family. Type 3B subfamily.

It localises to the cytoplasm. It catalyses the reaction D-sedoheptulose 7-phosphate + D-glyceraldehyde 3-phosphate = D-erythrose 4-phosphate + beta-D-fructose 6-phosphate. It functions in the pathway carbohydrate degradation; pentose phosphate pathway; D-glyceraldehyde 3-phosphate and beta-D-fructose 6-phosphate from D-ribose 5-phosphate and D-xylulose 5-phosphate (non-oxidative stage): step 2/3. Transaldolase is important for the balance of metabolites in the pentose-phosphate pathway. This is Probable transaldolase from Clostridium perfringens (strain SM101 / Type A).